We begin with the raw amino-acid sequence, 298 residues long: GTPase Era (298 aa).

An Era-type G domain is found at 3–170; the sequence is KSGFVAILGR…VQLLKDNLEE (168 aa). The G1 stretch occupies residues 11-18; the sequence is GRPNVGKS. Position 11-18 (11-18) interacts with GTP; sequence GRPNVGKS. Residues 37–41 are G2; that stretch reads QTTRN. The tract at residues 58–61 is G3; the sequence is DTPG. GTP-binding positions include 58-62 and 120-123; these read DTPGI and NKID. Residues 120–123 are G4; that stretch reads NKID. Residues 149–151 are G5; that stretch reads ISA. A KH type-2 domain is found at 201 to 279; that stretch reads TQQEVPHSVA…YLETWVKVKK (79 aa).

It belongs to the TRAFAC class TrmE-Era-EngA-EngB-Septin-like GTPase superfamily. Era GTPase family. In terms of assembly, monomer.

Its subcellular location is the cytoplasm. It localises to the cell membrane. In terms of biological role, an essential GTPase that binds both GDP and GTP, with rapid nucleotide exchange. Plays a role in 16S rRNA processing and 30S ribosomal subunit biogenesis and possibly also in cell cycle regulation and energy metabolism. The polypeptide is GTPase Era (Streptococcus equi subsp. zooepidemicus (strain MGCS10565)).